Here is a 411-residue protein sequence, read N- to C-terminus: ATP-dependent Clp protease ATP-binding subunit ClpX (411 aa).

One can recognise a ClpX-type ZB domain in the interval Met-1–Ile-49. Zn(2+) contacts are provided by Cys-8, Cys-11, Cys-30, and Cys-33. Pro-115–Leu-122 contributes to the ATP binding site.

This sequence belongs to the ClpX chaperone family. As to quaternary structure, component of the ClpX-ClpP complex. Forms a hexameric ring that, in the presence of ATP, binds to fourteen ClpP subunits assembled into a disk-like structure with a central cavity, resembling the structure of eukaryotic proteasomes.

ATP-dependent specificity component of the Clp protease. It directs the protease to specific substrates. Can perform chaperone functions in the absence of ClpP. The protein is ATP-dependent Clp protease ATP-binding subunit ClpX of Dictyoglomus turgidum (strain DSM 6724 / Z-1310).